Reading from the N-terminus, the 243-residue chain is Ornithine decarboxylase antizyme 3 (243 aa).

Phosphoserine occurs at positions 6, 9, and 12.

It belongs to the ODC antizyme family. As to quaternary structure, interacts with ODC1 and thereby sterically blocks ODC homodimerization. Interacts with AZIN2; this interaction disrupts the interaction between the antizyme and ODC1. Interacts with GGN. As to expression, testis specific. Expressed throughout the differentiation process from spermatids to spermatozoa in the inner part of the seminiferous tubules.

Its subcellular location is the nucleus. It localises to the cytoplasm. Functionally, ornithine decarboxylase (ODC) antizyme protein that negatively regulates ODC activity and intracellular polyamine biosynthesis and uptake in response to increased intracellular polyamine levels. Binds to ODC monomers, inhibiting the assembly of the functional ODC homodimers. Does not target the ODC monomers for degradation, which allows a protein synthesis-independent restoration of ODC activity. Stabilizes AZIN2 by interfering with its ubiquitination. Involved in the translocation of AZNI2 from ER-Golgi intermediate compartment (ERGIC) to the cytosol. Probably plays a key role in spermatogenesis by regulating the intracellular concentration of polyamines in haploid germ cells. In Mus musculus (Mouse), this protein is Ornithine decarboxylase antizyme 3 (Oaz3).